A 290-amino-acid chain; its full sequence is HTH-type transcriptional regulator BsdA (290 aa).

The 59-residue stretch at 1–59 (MDIRQLRYFITIAQEQKITSAAKKLHMAQPPLSRQLKQLEDELGVVLFDRNKKKQMTLT) folds into the HTH lysR-type domain. The H-T-H motif DNA-binding region spans 18-37 (ITSAAKKLHMAQPPLSRQLK).

This sequence belongs to the LysR transcriptional regulatory family.

Its function is as follows. Could be a positive regulator of bsdBCD expression in response to salicylic acid. The chain is HTH-type transcriptional regulator BsdA (bsdA) from Bacillus subtilis (strain 168).